Here is a 1396-residue protein sequence, read N- to C-terminus: DNA-directed RNA polymerase subunit beta' (1396 aa).

Residues Cys70, Cys72, Cys85, and Cys88 each coordinate Zn(2+). Positions 460, 462, and 464 each coordinate Mg(2+). Cys807, Cys881, Cys888, and Cys891 together coordinate Zn(2+). The segment covering 1361 to 1378 (EPEEIEEPVPEDLEDETA) has biased composition (acidic residues). Positions 1361–1396 (EPEEIEEPVPEDLEDETAGADSAQAASEESVAEGKD) are disordered. Residues 1379 to 1389 (GADSAQAASEE) show a composition bias toward low complexity.

The protein belongs to the RNA polymerase beta' chain family. As to quaternary structure, the RNAP catalytic core consists of 2 alpha, 1 beta, 1 beta' and 1 omega subunit. When a sigma factor is associated with the core the holoenzyme is formed, which can initiate transcription. Mg(2+) serves as cofactor. The cofactor is Zn(2+).

The catalysed reaction is RNA(n) + a ribonucleoside 5'-triphosphate = RNA(n+1) + diphosphate. Functionally, DNA-dependent RNA polymerase catalyzes the transcription of DNA into RNA using the four ribonucleoside triphosphates as substrates. In Syntrophotalea carbinolica (strain DSM 2380 / NBRC 103641 / GraBd1) (Pelobacter carbinolicus), this protein is DNA-directed RNA polymerase subunit beta'.